Reading from the N-terminus, the 510-residue chain is GMP synthase [glutamine-hydrolyzing] (510 aa).

The Glutamine amidotransferase type-1 domain maps to 5 to 195; that stretch reads LVLILDFGGQ…LYEVCHCQGD (191 aa). Catalysis depends on Cys-82, which acts as the Nucleophile. Active-site residues include His-169 and Glu-171. Residues 196–385 enclose the GMPS ATP-PPase domain; that stretch reads WTMENYIEKE…LGVPEEIVWR (190 aa). Residue 223–229 participates in ATP binding; it reads SGGVDSS.

In terms of assembly, homodimer.

It catalyses the reaction XMP + L-glutamine + ATP + H2O = GMP + L-glutamate + AMP + diphosphate + 2 H(+). It participates in purine metabolism; GMP biosynthesis; GMP from XMP (L-Gln route): step 1/1. Functionally, catalyzes the synthesis of GMP from XMP. The protein is GMP synthase [glutamine-hydrolyzing] of Alkaliphilus metalliredigens (strain QYMF).